We begin with the raw amino-acid sequence, 1171 residues long: ATP-dependent helicase/deoxyribonuclease subunit B (1171 aa).

The UvrD-like helicase ATP-binding domain maps to 1 to 343; that stretch reads MSLRFVIGRA…LVAEENYRYR (343 aa). Residue 8-15 participates in ATP binding; it reads GRAGSGKS. One can recognise a UvrD-like helicase C-terminal domain in the interval 281-587; it reads MEQPRFHSPA…QFANIPPSLD (307 aa). [4Fe-4S] cluster-binding residues include Cys-805, Cys-1129, Cys-1132, and Cys-1138.

Belongs to the helicase family. AddB/RexB type 1 subfamily. In terms of assembly, heterodimer of AddA and AddB. The cofactor is Mg(2+). [4Fe-4S] cluster serves as cofactor.

The heterodimer acts as both an ATP-dependent DNA helicase and an ATP-dependent, dual-direction single-stranded exonuclease. Recognizes the chi site generating a DNA molecule suitable for the initiation of homologous recombination. The AddB subunit has 5' -&gt; 3' nuclease activity but not helicase activity. This chain is ATP-dependent helicase/deoxyribonuclease subunit B, found in Bacillus thuringiensis (strain Al Hakam).